The primary structure comprises 315 residues: ADP/ATP translocase 4 (315 aa).

Over Met-1 to Ser-19 the chain is Mitochondrial intermembrane. The stretch at Ser-18 to Leu-110 is one Solcar 1 repeat. The helical transmembrane segment at Phe-20–Gln-49 threads the bilayer. At Val-50–Asn-86 the chain is on the mitochondrial matrix side. The helical transmembrane segment at Leu-87–Phe-111 threads the bilayer. The ADP site is built by Arg-92 and Lys-104. The Mitochondrial intermembrane segment spans residues Met-112 to Phe-121. The chain crosses the membrane as a helical span at residues Trp-122–Val-142. Solcar repeat units follow at residues Arg-123–Leu-213 and Thr-220–Phe-307. The Mitochondrial matrix portion of the chain corresponds to Val-143 to Gly-190. Residues Val-191–Lys-211 form a helical membrane-spanning segment. Residues Gly-212 to Phe-222 are Mitochondrial intermembrane-facing. Residues Leu-223 to Phe-243 traverse the membrane as a helical segment. Residues Asp-244 to Gly-283 are Mitochondrial matrix-facing. Arg-247 contacts ADP. The interval Arg-247–Met-252 is important for transport activity. Positions Arg-247–Met-252 match the Nucleotide carrier signature motif motif. The helical transmembrane segment at Ala-284–Tyr-301 threads the bilayer. Over Asp-302 to Arg-315 the chain is Mitochondrial intermembrane.

It belongs to the mitochondrial carrier (TC 2.A.29) family. Monomer.

It localises to the mitochondrion inner membrane. The protein localises to the membrane. The protein resides in the cell projection. Its subcellular location is the cilium. It is found in the flagellum membrane. The catalysed reaction is ADP(in) + ATP(out) = ADP(out) + ATP(in). It catalyses the reaction dATP(out) + ADP(in) = dATP(in) + ADP(out). It carries out the reaction dADP(in) + ADP(out) = dADP(out) + ADP(in). The enzyme catalyses H(+)(in) = H(+)(out). With respect to regulation, the matrix-open state (m-state) is inhibited by the membrane-permeable bongkrekic acid (BKA). The cytoplasmic-open state (c-state) is inhibited by the membrane-impermeable toxic inhibitor carboxyatractyloside (CATR). Proton transporter activity is inhibited by ADP:ATP antiporter activity. Its function is as follows. ADP:ATP antiporter that mediates import of ADP into the mitochondrial matrix for ATP synthesis, and export of ATP out to fuel the cell. Cycles between the cytoplasmic-open state (c-state) and the matrix-open state (m-state): operates by the alternating access mechanism with a single substrate-binding site intermittently exposed to either the cytosolic (c-state) or matrix (m-state) side of the inner mitochondrial membrane. Specifically required during spermatogenesis, probably to mediate ADP:ATP exchange in spermatocytes. Large ATP supplies from mitochondria may be critical for normal progression of spermatogenesis during early stages of meiotic prophase I, including DNA double-strand break repair and chromosomal synapsis. In addition to its ADP:ATP antiporter activity, also involved in mitochondrial uncoupling and mitochondrial permeability transition pore (mPTP) activity. Plays a role in mitochondrial uncoupling by acting as a proton transporter: proton transport uncouples the proton flows via the electron transport chain and ATP synthase to reduce the efficiency of ATP production and cause mitochondrial thermogenesis. Proton transporter activity is inhibited by ADP:ATP antiporter activity, suggesting that SLC25A31/ANT4 acts as a master regulator of mitochondrial energy output by maintaining a delicate balance between ATP production (ADP:ATP antiporter activity) and thermogenesis (proton transporter activity). Proton transporter activity requires free fatty acids as cofactor, but does not transport it. Among nucleotides, may also exchange ADP for dATP and dADP. Also plays a key role in mPTP opening, a non-specific pore that enables free passage of the mitochondrial membranes to solutes of up to 1.5 kDa, and which contributes to cell death. It is however unclear if SLC25A31/ANT4 constitutes a pore-forming component of mPTP or regulates it. This Macaca fascicularis (Crab-eating macaque) protein is ADP/ATP translocase 4.